A 1103-amino-acid polypeptide reads, in one-letter code: Retinal guanylyl cyclase 2 (1103 aa).

The first 46 residues, 1–46 (MFLAPWPFSHLMLWFVTLGRQRGQHGLASFKLLWCLWLLVLMSLPL), serve as a signal peptide directing secretion. The Extracellular portion of the chain corresponds to 47 to 465 (QVWAPPYKIG…DGRICQGGIN (419 aa)). C104 and C132 are disulfide-bonded. Residues 466 to 490 (PTFALMVCLALLIALLSINGFAYFI) traverse the membrane as a helical segment. The Cytoplasmic portion of the chain corresponds to 491 to 1103 (RHRINKIQLI…FQRRKQKSSW (613 aa)). Positions 532 to 812 (FQITSEVQSG…DEIFNQFKTF (281 aa)) constitute a Protein kinase domain. Positions 884 to 1014 (TLYFSDIVGF…DTVNTASRME (131 aa)) constitute a Guanylate cyclase domain.

The protein belongs to the adenylyl cyclase class-4/guanylyl cyclase family. Homodimer. Interacts with RD3; promotes the exit of GUCY2F from the endoplasmic reticulum and its trafficking to the photoreceptor outer segments. There are 9 conserved cysteine residues in sensory guanylate cyclases, 6 in the extracellular domain, which may be involved in intra- or interchain disulfide bonds. In terms of tissue distribution, expressed specifically in retina.

The protein localises to the membrane. It is found in the photoreceptor outer segment membrane. It carries out the reaction GTP = 3',5'-cyclic GMP + diphosphate. With respect to regulation, activated by GUCA1B when free calcium ions concentration is low, and inhibited by GUCA1B when free calcium ions concentration is high. Inhibited by RD3. Responsible for the synthesis of cyclic GMP (cGMP) in rods and cones of photoreceptors. Plays an essential role in phototransduction, by mediating cGMP replenishment. May also participate in the trafficking of membrane-asociated proteins to the photoreceptor outer segment membrane. The chain is Retinal guanylyl cyclase 2 (GUCY2F) from Bos taurus (Bovine).